The following is a 948-amino-acid chain: Bifunctional uridylyltransferase/uridylyl-removing enzyme (948 aa).

The interval 1 to 372 (METHHIDFST…RFANRSRKIP (372 aa)) is uridylyltransferase. The segment at 373-728 (GTVEFVEDRG…VRTDSFHAIT (356 aa)) is uridylyl-removing. Residues 489 to 605 (VDEHLIRAVE…IDFADRVQSL (117 aa)) enclose the HD domain. ACT domains follow at residues 729–810 (EITV…EVIA) and 840–921 (VIEV…ERMP).

The protein belongs to the GlnD family. The cofactor is Mg(2+).

The enzyme catalyses [protein-PII]-L-tyrosine + UTP = [protein-PII]-uridylyl-L-tyrosine + diphosphate. It catalyses the reaction [protein-PII]-uridylyl-L-tyrosine + H2O = [protein-PII]-L-tyrosine + UMP + H(+). Uridylyltransferase (UTase) activity is inhibited by glutamine, while glutamine activates uridylyl-removing (UR) activity. In terms of biological role, modifies, by uridylylation and deuridylylation, the PII regulatory proteins (GlnB and homologs), in response to the nitrogen status of the cell that GlnD senses through the glutamine level. Under low glutamine levels, catalyzes the conversion of the PII proteins and UTP to PII-UMP and PPi, while under higher glutamine levels, GlnD hydrolyzes PII-UMP to PII and UMP (deuridylylation). Thus, controls uridylylation state and activity of the PII proteins, and plays an important role in the regulation of nitrogen fixation and metabolism. This chain is Bifunctional uridylyltransferase/uridylyl-removing enzyme, found in Rhizobium tropici.